We begin with the raw amino-acid sequence, 192 residues long: MIFQKKRKTAETELSIILADDKRTSEINTGVGFLNHMLTLFTFHSGLSIIIEANGDTEVDDHHVTEDIGIVLGQLLLDMIRERKSFQRYGVSYIPMDETLSRAVVDISGRPYLSFNATLSKEKVGTFDSELVEEFFRALIINARLTTHIDLLRGGNTHHEIEAIFKSFARALKMALSENDNDNIPSSKGVIE.

This sequence belongs to the imidazoleglycerol-phosphate dehydratase family.

It localises to the cytoplasm. The enzyme catalyses D-erythro-1-(imidazol-4-yl)glycerol 3-phosphate = 3-(imidazol-4-yl)-2-oxopropyl phosphate + H2O. It functions in the pathway amino-acid biosynthesis; L-histidine biosynthesis; L-histidine from 5-phospho-alpha-D-ribose 1-diphosphate: step 6/9. The polypeptide is Imidazoleglycerol-phosphate dehydratase (Staphylococcus saprophyticus subsp. saprophyticus (strain ATCC 15305 / DSM 20229 / NCIMB 8711 / NCTC 7292 / S-41)).